A 250-amino-acid chain; its full sequence is MSDSAVATSASPVIAQAASGEKKVSTKKAAATPKSKKSTAAPPSHPPTQQMVDASIKNLKERGGSSLLAIKKYIGATYKCDAQKLAPFIKKYLKNAVANGKLIQTKGKGASGSFKLSRSAKKDPKPKASAVEKKTKKVNASAARATKKKSSTSTTKKAAGAADKKLSKSAPTKKSVEKKRADKAKAKDAKKTGTIKAKPTTAKAKSSATKPKTPKPKTKSAKPKKVVSATTPKKTAVKKPKAKTASATKK.

Residues 1–11 (MSDSAVATSAS) are compositionally biased toward polar residues. 2 disordered regions span residues 1 to 53 (MSDS…QMVD) and 101 to 250 (KLIQ…ATKK). The span at 27–42 (KKAAATPKSKKSTAAP) shows a compositional bias: low complexity. The 75-residue stretch at 44 to 118 (SHPPTQQMVD…GASGSFKLSR (75 aa)) folds into the H15 domain. Positions 120-133 (AKKDPKPKASAVEK) are enriched in basic and acidic residues. Residues 151-161 (STSTTKKAAGA) are compositionally biased toward low complexity. Basic and acidic residues predominate over residues 174–191 (KSVEKKRADKAKAKDAKK). Residues 192–211 (TGTIKAKPTTAKAKSSATKP) show a composition bias toward low complexity. Composition is skewed to basic residues over residues 212-225 (KTPKPKTKSAKPKK) and 235-250 (TAVKKPKAKTASATKK).

It belongs to the histone H1/H5 family.

Its subcellular location is the nucleus. It localises to the chromosome. Histones H1 are necessary for the condensation of nucleosome chains into higher-order structures. This chain is Histone H1.2 (His1.2), found in Drosophila virilis (Fruit fly).